The chain runs to 139 residues: MLDHSEKVLLVDSETMKTRAEDMIEQNNTSVNDKKKTCADCGTSKTPLWRGGPVGPKSLCNACGIRNRKKRRGGTEDNKKLKKSSSGGGNRKFGESLKQSLMDLGIRKRSTVEKQRQKLGEEEQAAVLLMALSYGSVYA.

Residues 32–86 form a GATA-type zinc finger; the sequence is NDKKKTCADCGTSKTPLWRGGPVGPKSLCNACGIRNRKKRRGGTEDNKKLKKSSS. The tract at residues 67–98 is disordered; the sequence is NRKKRRGGTEDNKKLKKSSSGGGNRKFGESLK.

Belongs to the type IV zinc-finger family. Class B subfamily.

It is found in the nucleus. Functionally, transcriptional regulator that specifically binds 5'-GATA-3' or 5'-GAT-3' motifs within gene promoters. The sequence is that of GATA transcription factor 16 (GATA16) from Arabidopsis thaliana (Mouse-ear cress).